Consider the following 255-residue polypeptide: Putative glycyl-radical enzyme activating enzyme MJ1632 (255 aa).

The 216-residue stretch at 30 to 245 (SHISLSDKIT…SNVSCSLDFK (216 aa)) folds into the Radical SAM core domain. Residues cysteine 45, cysteine 49, and cysteine 52 each contribute to the [4Fe-4S] cluster site. Residues 51–53 (YCF), glycine 88, and 134–136 (DLK) each bind S-adenosyl-L-methionine.

Belongs to the organic radical-activating enzymes family. The cofactor is [4Fe-4S] cluster.

It catalyses the reaction glycyl-[protein] + reduced [flavodoxin] + S-adenosyl-L-methionine = glycin-2-yl radical-[protein] + semiquinone [flavodoxin] + 5'-deoxyadenosine + L-methionine + H(+). This chain is Putative glycyl-radical enzyme activating enzyme MJ1632, found in Methanocaldococcus jannaschii (strain ATCC 43067 / DSM 2661 / JAL-1 / JCM 10045 / NBRC 100440) (Methanococcus jannaschii).